Consider the following 154-residue polypeptide: MTALCPCQSGLDYADCCEPFHSFKTCPQTAEQLMRSRYCAYVLKNIDYVIQTTVPGQQAQLDKTLLQDWANDTSWTGLQIVRHQPAVSKIHSKVEFNAFFKVNDEKQTHNENSLFVKIDGRWYFVDSTVELPNQKHPCLCGSGKKFKHCCGAYL.

The protein belongs to the UPF0225 family.

This Actinobacillus succinogenes (strain ATCC 55618 / DSM 22257 / CCUG 43843 / 130Z) protein is UPF0225 protein Asuc_0343.